The sequence spans 431 residues: Trigger factor (431 aa).

The 86-residue stretch at 158-243 (GDLVAVETWS…VAEVSEPVVP (86 aa)) folds into the PPIase FKBP-type domain.

It belongs to the FKBP-type PPIase family. Tig subfamily.

Its subcellular location is the cytoplasm. It catalyses the reaction [protein]-peptidylproline (omega=180) = [protein]-peptidylproline (omega=0). Involved in protein export. Acts as a chaperone by maintaining the newly synthesized protein in an open conformation. Functions as a peptidyl-prolyl cis-trans isomerase. The polypeptide is Trigger factor (Stenotrophomonas maltophilia (strain K279a)).